The primary structure comprises 564 residues: Ell-associated factor Eaf (564 aa).

Disordered stretches follow at residues 179–255 and 270–564; these read SGPG…MITD and QANI…DDDD. The segment covering 186 to 205 has biased composition (polar residues); it reads ENSTMRVSSKTKVSTGSRRN. Position 215 is a phosphoserine (Ser-215). Over residues 274–283 the composition is skewed to low complexity; sequence SGSSTGSSSG. Basic residues predominate over residues 297–309; that stretch reads GKQRQAHGKRQQI. Composition is skewed to low complexity over residues 315–329, 343–387, and 409–420; these read PPVQQQPHYQQQQQP, QQQQ…QQRP, and ASQSVAQAAAVL. The span at 438–453 shows a compositional bias: acidic residues; that stretch reads DSSDSDSGSDSDDSTE. 3 stretches are compositionally biased toward low complexity: residues 463–505, 523–533, and 546–564; these read EQQQ…NQLP, QQPQPQPQQQQ, and NDLLQNDLQLSSNSSDDDD.

This sequence belongs to the EAF family.

Its subcellular location is the nucleus. Functionally, promotes transcriptional elongation by Su(Tpl)/ELL. Essential for development. This Drosophila pseudoobscura pseudoobscura (Fruit fly) protein is Ell-associated factor Eaf.